Here is a 357-residue protein sequence, read N- to C-terminus: MEQKQRRFTKNIFVLDANAKTLCGRIAKLSSQPYCQIKIGRVIAFKPVKNPEPKGYVLNVPGPGAYRIQDGQDIISLMLTPHGVEATTERWEEWKFEGVSVTPMATRVQHNGVMVDAEIKYCKGMGIVQPYMRNDFDRNEMPDLPGVMRSNYDIRELRQKIKNERESAPRLQVQSVAPREESRWMDDDEAKVDEEAREMIPGTSRLEKLREARSNVFKEVAAGINWNLDEKDEEDGDEREDEERVKTLSDDDEQGEDASDDEHPKTHITKEYVEKVAKQIKLKDERFMSLSSAMPQASGGFDRMIVTKKLKWQNVPLYCFDESSKRYELQCVGACERVAFVSKDMSLIILRSAFRRL.

Disordered regions lie at residues 163 to 199 (NERESAPRLQVQSVAPREESRWMDDDEAKVDEEAREM) and 228 to 267 (LDEKDEEDGDEREDEERVKTLSDDDEQGEDASDDEHPKTH). Composition is skewed to acidic residues over residues 230–241 (EKDEEDGDERED) and 250–260 (DDDEQGEDASD).

This sequence belongs to the orbivirus non-structural protein NS2 family.

Functionally, single-stranded RNA-binding protein. The polypeptide is Non-structural protein NS2 (Segment-8) (Antilocapra americana (Pronghorn)).